Here is a 1004-residue protein sequence, read N- to C-terminus: MEEEGSGRGGDGPAAHGRIGDTASLGASCVRAGVGGDSPVMVSSASVRKTVKMSETCDFIPYVDDDDDGNSEEENSASSGILPCDGMQHDTPDYIRRGAAAARHRIAPLELFSGPSPPQGPPSPSPAIGGAALEATSNDGVAEPQVHPPEGISSIISTGGGEQETATMGSQSVHETLHIEENEGKCSCCGQLKQEYSLLLREKEECRRVLEDLMRENELKSRECHEAQASLHELRMELMRKSMHVGSLAFAVEGQVKEKSRWCQLLNDLSEKFKALKAEHQILLQESLECKKFVADATQMTTTIQQHVNQYASLECEFKDLKEKFTEETKERKDLYNKLIEVKGNIRVFCRCRPLNGEEIEEGASMAVDFESAKDGELIVRGHVSSKKVFKFDSVFSPEEDQEKVFEKTVPFATSVLDGYNVCIFAYGQTGTGKTFTMEGIEDARGVNYRTLEELFRITKERQGLFQYEITVSVLEVYNEQIHDLLLTGTQPGATAKRLEVRQVAEGVHHVPGLVEARVTNMNEAWEVLQTGSKARVVGSTNANEHSSRSHCMHCVMVKGENLMNGEQTKSKLWLIDLAGSERVAKTDAQGERLKEAQNINKSLSALGDVISALATKSQHIPFRNSKLTHLLQDSLSGDSKTLMFVQISPNENDVGETLCSLNFASRVRGIELGQARKQVDVGELSRYKLMAGRAKQDSKNKDAQIKSMEETIQSLEAKNKAKDLLTMNLQEKIKELEAQLLVERKIARQHVDNKIAQDHLHQQQQSKKPENSPCPTRSPMAERNLNSTAEKPVTLLKDLGIARQMFSDSNTDTYSINHLMSMSSEKENNPAGGAQPTKARRVSLCGGAHQQPAAPPRRGSLIPLPRRNSLMLPLPLPKPATPAAAASPLDMITEQCSSPLVIAPNDIRGGGGGGGRNKRIINSILRRSLQKKVIIRPPLMAAHQSGRRAGAGVAGTTTHGGGGGGVMRARRVPVSGGRGGGGVQHNREKERGWNNGTSLRQLN.

3 disordered regions span residues 1-21 (MEEE…RIGD), 61-90 (PYVD…MQHD), and 110-169 (ELFS…ATMG). A compositionally biased stretch (acidic residues) spans 63-75 (VDDDDDGNSEEEN). Residues 115 to 125 (PSPPQGPPSPS) show a composition bias toward pro residues. Coiled coils occupy residues 189–230 (CGQL…AQAS) and 266–338 (LNDL…LYNK). Residues 345–671 (NIRVFCRCRP…LNFASRVRGI (327 aa)) enclose the Kinesin motor domain. 428 to 435 (GQTGTGKT) is a binding site for ATP. A coiled-coil region spans residues 691–742 (MAGRAKQDSKNKDAQIKSMEETIQSLEAKNKAKDLLTMNLQEKIKELEAQLL). 2 disordered regions span residues 759–791 (DHLH…STAE) and 946–1004 (SGRR…RQLN). Residues 948–958 (RRAGAGVAGTT) show a composition bias toward low complexity. Positions 995–1004 (NNGTSLRQLN) are enriched in polar residues.

It belongs to the TRAFAC class myosin-kinesin ATPase superfamily. Kinesin family. KIN-14 subfamily.

This chain is Kinesin-like protein KIN-14R, found in Oryza sativa subsp. japonica (Rice).